We begin with the raw amino-acid sequence, 259 residues long: Thiazole synthase (259 aa).

Lysine 95 (schiff-base intermediate with DXP) is an active-site residue. Residues glycine 156, 183–184 (AG), and 205–206 (NS) contribute to the 1-deoxy-D-xylulose 5-phosphate site.

The protein belongs to the ThiG family. As to quaternary structure, homotetramer. Forms heterodimers with either ThiH or ThiS.

The protein resides in the cytoplasm. The enzyme catalyses [ThiS sulfur-carrier protein]-C-terminal-Gly-aminoethanethioate + 2-iminoacetate + 1-deoxy-D-xylulose 5-phosphate = [ThiS sulfur-carrier protein]-C-terminal Gly-Gly + 2-[(2R,5Z)-2-carboxy-4-methylthiazol-5(2H)-ylidene]ethyl phosphate + 2 H2O + H(+). It participates in cofactor biosynthesis; thiamine diphosphate biosynthesis. Its function is as follows. Catalyzes the rearrangement of 1-deoxy-D-xylulose 5-phosphate (DXP) to produce the thiazole phosphate moiety of thiamine. Sulfur is provided by the thiocarboxylate moiety of the carrier protein ThiS. In vitro, sulfur can be provided by H(2)S. The protein is Thiazole synthase of Coxiella burnetii (strain RSA 331 / Henzerling II).